The chain runs to 204 residues: Cardiotrophin-2 (204 aa).

The signal sequence occupies residues 1 to 22 (MYCLLATPLCLLSLLLPPLSPA). Asn44 carries an N-linked (GlcNAc...) asparagine glycan.

Belongs to the IL-6 superfamily. In terms of assembly, binds to tripartite CNTF receptor complex consisting of CNTF alpha chain, LIFR and IL6ST (in vitro). In terms of tissue distribution, not detected in adult tissues.

Its subcellular location is the secreted. Functionally, increases the platelet count associated with splenomegaly. May have an important role in neuronal precursor development and maturation. The polypeptide is Cardiotrophin-2 (Ctf2) (Mus musculus (Mouse)).